The primary structure comprises 509 residues: Zinc metalloproteinase aureolysin (509 aa).

Positions 1-27 (MRKFSRYAFTSMATVTLLSSLTPAALA) are cleaved as a signal peptide. Residues 28–208 (SDTNHKPATS…VVEKTNLVKE (181 aa)) constitute a propeptide that is removed on maturation. Residue D348 participates in Ca(2+) binding. H352 lines the Zn(2+) pocket. The active site involves E353. The Zn(2+) site is built by H356 and E376. Ca(2+) is bound by residues D387, E389, D390, L392, E395, Y398, T399, K402, and D405. The active-site Proton donor is H436.

It belongs to the peptidase M4 family. Monomer. Ca(2+) is required as a cofactor. It depends on Zn(2+) as a cofactor.

It carries out the reaction Cleavage of insulin B chain with specificity similar to that of thermolysin, preferring hydrophobic P1' residues. Activates the glutamyl endopeptidase (EC 3.4.21.19) of Staphylococcus aureus.. Plays an essential role in immune evasion by helping bacteria to resist complement-mediated killing by neutrophils. Inhibits the deposition of host C3b on bacterial surfaces and the release of the chemoattractant C5a by cleaving the central complement protein C3. The cleavage site renders the C3b molecule vulnerable to proteolytic degradation by host regulators. Cleaves and inactivates host SERPINA1, which is an endogenous protease inhibitor essential for controlling neutrophil serine protease elastase. Also plays an essential role in the cleavage and subsequent activation of the serine protease SspA (glutamyl endopeptidase) which is involved in colonization and infection of human tissues. The protein is Zinc metalloproteinase aureolysin of Staphylococcus aureus.